We begin with the raw amino-acid sequence, 62 residues long: Beta-defensin 110 (62 aa).

The signal sequence occupies residues 1–21 (MKIHLFFFILLFWVTILPARS). Disulfide bonds link cysteine 32–cysteine 60, cysteine 39–cysteine 53, and cysteine 43–cysteine 61.

The protein belongs to the beta-defensin family.

Its subcellular location is the secreted. Functionally, has antibacterial activity. This Canis lupus familiaris (Dog) protein is Beta-defensin 110 (DEFB110).